The primary structure comprises 1309 residues: DNA repair protein RAD9 (1309 aa).

Residues 1 to 19 show a composition bias toward polar residues; the sequence is MSGQLVQWKSSPDRVTQSA. The tract at residues 1–39 is disordered; it reads MSGQLVQWKSSPDRVTQSAIKEALHSPLADGDMNEMNVP. A phosphoserine mark is found at Ser-26, Ser-56, and Ser-205. Thr-218 is modified (phosphothreonine). A Phosphoserine modification is found at Ser-248. Residues 280–299 are disordered; the sequence is NIGAIEEKNPVKKKSENYSS. The span at 284 to 299 shows a compositional bias: basic and acidic residues; the sequence is IEEKNPVKKKSENYSS. Phosphoserine is present on residues Ser-312 and Ser-315. The tract at residues 342 to 365 is disordered; it reads NSAVSGTPSRNNAEEEMYSSESVN. Residues 343–352 show a composition bias toward polar residues; the sequence is SAVSGTPSRN. Ser-462 carries the phosphoserine modification. Phosphothreonine is present on residues Thr-471 and Thr-474. The segment at 490–512 is disordered; the sequence is PETSSPSKNTMSKPSNSSPIPKE. Residues 491–508 show a composition bias toward polar residues; it reads ETSSPSKNTMSKPSNSSP. Ser-568 carries the post-translational modification Phosphoserine. 2 disordered regions span residues 636–655 and 691–731; these read KGNSLQLHDDNKECNSDKQD and IIQN…NSDL. Residues 642–655 are compositionally biased toward basic and acidic residues; it reads LHDDNKECNSDKQD. Residue Ser-729 is modified to Phosphoserine. Residues 994 to 1122 form the BRCT domain; the sequence is RTGNVFDKCI…RIVPHLIYQY (129 aa).

Physically associates with RAD53.

It is found in the nucleus. Its function is as follows. Essential for cell cycle arrest at the G2 stage following DNA damage by X-irradiation or inactivation of DNA ligase. The protein is DNA repair protein RAD9 (RAD9) of Saccharomyces cerevisiae (strain ATCC 204508 / S288c) (Baker's yeast).